A 392-amino-acid chain; its full sequence is MVVDVESRTASVTGEKMAARGCDACMKRSRASWYCPADDAFLCQSCDASIHSANHLAKRHERVRLQSSSPTETADKTTSVWYEGFRRKARTPRSKSCAFEKLLQIESNDPLVPELGGDEDDGFFSFSSVEETEESLNCCVPVFDPFSDMLIDDINGFCLVPDEVNNTTTNGELGEVEKAIMDDEGFMGFVPLDMDLEDLTMDVESLLEEEQLCLGFKEPNDVGVIKEENKVGFEINCKDLKRVKDEDEEEEEAKCENGGSKDSDREASNDKDRKTSLFLRLDYGAVISAWDNHGSPWKTGIKPECMLGGNTCLPHVVGGYEKLMSSDGSVTRQQGRDGGGSDGEREARVLRYKEKRRTRLFSKKIRYEVRKLNAEQRPRIKGRFVKRTSLLT.

Zn(2+) contacts are provided by cysteine 22, cysteine 25, cysteine 46, and histidine 51. Residues cysteine 22–leucine 65 form a B box-type; atypical zinc finger. Residues lysine 226–lysine 254 are a coiled coil. 2 disordered regions span residues glutamate 246 to lysine 271 and serine 326 to glutamate 346. The segment covering glycine 259–lysine 271 has biased composition (basic and acidic residues). In terms of domain architecture, CCT spans arginine 345–arginine 387.

Belongs to the CONSTANS family.

Its subcellular location is the nucleus. This Arabidopsis thaliana (Mouse-ear cress) protein is Zinc finger protein CONSTANS-LIKE 7 (COL7).